The primary structure comprises 308 residues: Putative acetyl-hydrolase LipR (308 aa).

The N-terminal stretch at 1–40 (MNLRKNVIRSVLRGARPLFASRRLGIAGRRVLLATLTAGA) is a signal peptide. Positions 76–78 (HGG) match the Involved in the stabilization of the negatively charged intermediate by the formation of the oxyanion hole motif. Catalysis depends on residues Ser-146, Asp-239, and His-269.

This sequence belongs to the 'GDXG' lipolytic enzyme family.

In terms of biological role, required for maintaining the appropriate mycolic acid composition and permeability of the envelope on its exposure to acidic pH. The polypeptide is Putative acetyl-hydrolase LipR (lipR) (Mycobacterium tuberculosis (strain ATCC 25618 / H37Rv)).